The following is a 482-amino-acid chain: Type II methyltransferase M.AvaI (482 aa).

It belongs to the N(4)/N(6)-methyltransferase family. N(4) subfamily.

It catalyses the reaction a 2'-deoxycytidine in DNA + S-adenosyl-L-methionine = an N(4)-methyl-2'-deoxycytidine in DNA + S-adenosyl-L-homocysteine + H(+). Functionally, an alpha subtype methylase that recognizes the double-stranded sequence 5'-CYCGRG-3', methylates C-1 on both strands, and protects the DNA from cleavage by the AvaI endonuclease. The chain is Type II methyltransferase M.AvaI from Anabaena variabilis.